Here is a 106-residue protein sequence, read N- to C-terminus: uncharacterized protein (106 aa).

2 helical membrane-spanning segments follow: residues 17–37 and 55–75; these read AGLLMTISLAKSFSFAIAVLV and FSSSYVFLYFIVICRLRFMIF.

Its subcellular location is the membrane. This is an uncharacterized protein from Saccharomyces cerevisiae (strain ATCC 204508 / S288c) (Baker's yeast).